We begin with the raw amino-acid sequence, 511 residues long: 2-isopropylmalate synthase (511 aa).

The Pyruvate carboxyltransferase domain maps to 5 to 267; sequence LIVFDTTLRD…DTRIDATQIV (263 aa). D14, H202, H204, and N238 together coordinate Mn(2+). A regulatory domain region spans residues 393–511; that stretch reads RLVASRFHSE…SKLERLNPQL (119 aa).

This sequence belongs to the alpha-IPM synthase/homocitrate synthase family. LeuA type 1 subfamily. In terms of assembly, homodimer. Mn(2+) serves as cofactor.

It localises to the cytoplasm. The catalysed reaction is 3-methyl-2-oxobutanoate + acetyl-CoA + H2O = (2S)-2-isopropylmalate + CoA + H(+). It participates in amino-acid biosynthesis; L-leucine biosynthesis; L-leucine from 3-methyl-2-oxobutanoate: step 1/4. Functionally, catalyzes the condensation of the acetyl group of acetyl-CoA with 3-methyl-2-oxobutanoate (2-ketoisovalerate) to form 3-carboxy-3-hydroxy-4-methylpentanoate (2-isopropylmalate). The protein is 2-isopropylmalate synthase of Aromatoleum aromaticum (strain DSM 19018 / LMG 30748 / EbN1) (Azoarcus sp. (strain EbN1)).